A 177-amino-acid chain; its full sequence is Protein OPG036 (177 aa).

Belongs to the poxviridae OPG036 family.

The protein resides in the host nucleus. In terms of biological role, plays a role in the inhibition of host innate immune response. Within the host nucleus, inhibits activation of interferon-beta promoter by inhibiting IRF3 activation. This Monkeypox virus protein is Protein OPG036 (OPG036).